We begin with the raw amino-acid sequence, 563 residues long: Arginine--tRNA ligase (563 aa).

The short motif at 108 to 118 (PNVAKEMHVGH) is the 'HIGH' region element.

The protein belongs to the class-I aminoacyl-tRNA synthetase family. As to quaternary structure, monomer.

The protein resides in the cytoplasm. The enzyme catalyses tRNA(Arg) + L-arginine + ATP = L-arginyl-tRNA(Arg) + AMP + diphosphate. This chain is Arginine--tRNA ligase (argS), found in Pasteurella multocida (strain Pm70).